A 562-amino-acid chain; its full sequence is Bifunctional coenzyme A synthase (562 aa).

Phosphoserine occurs at positions 177 and 182. The segment at 179-357 (VARSAKQPVR…HKRPELPPGC (179 aa)) is phosphopantetheine adenylyltransferase. Residues 359-562 (VIGLTGISGS…KRISEAPSDP (204 aa)) form the DPCK domain. Residue 364-371 (GISGSGKS) coordinates ATP.

This sequence in the central section; belongs to the eukaryotic CoaD family. As to quaternary structure, monomer. The N-terminus is blocked.

Its subcellular location is the cytoplasm. The protein resides in the mitochondrion matrix. The enzyme catalyses (R)-4'-phosphopantetheine + ATP + H(+) = 3'-dephospho-CoA + diphosphate. It carries out the reaction 3'-dephospho-CoA + ATP = ADP + CoA + H(+). It functions in the pathway cofactor biosynthesis; coenzyme A biosynthesis; CoA from (R)-pantothenate: step 4/5. The protein operates within cofactor biosynthesis; coenzyme A biosynthesis; CoA from (R)-pantothenate: step 5/5. Functionally, bifunctional enzyme that catalyzes the fourth and fifth sequential steps of CoA biosynthetic pathway. The fourth reaction is catalyzed by the phosphopantetheine adenylyltransferase, coded by the coaD domain; the fifth reaction is catalyzed by the dephospho-CoA kinase, coded by the coaE domain. May act as a point of CoA biosynthesis regulation. The sequence is that of Bifunctional coenzyme A synthase from Sus scrofa (Pig).